The following is a 72-amino-acid chain: Long neurotoxin OH-17 (72 aa).

5 cysteine pairs are disulfide-bonded: Cys-3–Cys-21, Cys-14–Cys-42, Cys-27–Cys-31, Cys-46–Cys-57, and Cys-58–Cys-63.

The protein belongs to the three-finger toxin family. Long-chain subfamily. Type II alpha-neurotoxin sub-subfamily. As to expression, expressed by the venom gland.

It is found in the secreted. In terms of biological role, binds with high affinity to muscular (alpha-1/CHRNA1) and neuronal (alpha-7/CHRNA7) nicotinic acetylcholine receptor (nAChR) and inhibits acetylcholine from binding to the receptor, thereby impairing neuromuscular and neuronal transmission. This is Long neurotoxin OH-17 from Ophiophagus hannah (King cobra).